The following is a 75-amino-acid chain: Conotoxin VnMKLT2-012 (75 aa).

Positions 1–23 (MMKLTCVLIIAVLFLTACQLTTA) are cleaved as a signal peptide. Positions 24-45 (ETRDEYRAVRSSDEVRNSRSTR) are excised as a propeptide. Residues 31 to 45 (AVRSSDEVRNSRSTR) show a composition bias toward basic and acidic residues. Residues 31 to 50 (AVRSSDEVRNSRSTRDCSGS) form a disordered region. 3 disulfides stabilise this stretch: cysteine 47/cysteine 60, cysteine 54/cysteine 65, and cysteine 59/cysteine 74.

Belongs to the conotoxin O1 superfamily. In terms of tissue distribution, expressed by the venom duct.

It is found in the secreted. The polypeptide is Conotoxin VnMKLT2-012 (Conus ventricosus (Mediterranean cone)).